A 461-amino-acid chain; its full sequence is Photosystem II CP43 reaction center protein (461 aa).

Positions 1-2 (ME) are excised as a propeptide. Thr3 carries the N-acetylthreonine modification. Position 3 is a phosphothreonine (Thr3). Helical transmembrane passes span 57–81 (LFEV…PHLA), 122–143 (LLGP…KDRN), 166–188 (KALY…RKIT), 243–263 (KPFA…LSYS), and 279–300 (WFNN…ASQA). [CaMn4O5] cluster is bound at residue Glu355. The helical transmembrane segment at 435–459 (RARAAAAGFEKGIDRDFEPVLSMTP) threads the bilayer.

Belongs to the PsbB/PsbC family. PsbC subfamily. PSII is composed of 1 copy each of membrane proteins PsbA, PsbB, PsbC, PsbD, PsbE, PsbF, PsbH, PsbI, PsbJ, PsbK, PsbL, PsbM, PsbT, PsbX, PsbY, PsbZ, Psb30/Ycf12, at least 3 peripheral proteins of the oxygen-evolving complex and a large number of cofactors. It forms dimeric complexes. Binds multiple chlorophylls and provides some of the ligands for the Ca-4Mn-5O cluster of the oxygen-evolving complex. It may also provide a ligand for a Cl- that is required for oxygen evolution. PSII binds additional chlorophylls, carotenoids and specific lipids. serves as cofactor.

It localises to the plastid. The protein localises to the chloroplast thylakoid membrane. Functionally, one of the components of the core complex of photosystem II (PSII). It binds chlorophyll and helps catalyze the primary light-induced photochemical processes of PSII. PSII is a light-driven water:plastoquinone oxidoreductase, using light energy to abstract electrons from H(2)O, generating O(2) and a proton gradient subsequently used for ATP formation. The chain is Photosystem II CP43 reaction center protein from Gossypium barbadense (Sea Island cotton).